Here is a 284-residue protein sequence, read N- to C-terminus: MTFHQPVSETAQPDEASGHPLFADAPSSVEFNKLRKRLLRQVRQAFEDFTMVKPGDRWLVALSGGKDSYGLLAVLLDLKWRGLLPVELLACNLDQGQPNFPKHILPDYLTRLGVPHRIEYQDTYSVVTEKIPENRTYCSLCSRLRRGHLYRIAREEGCSSLVLGHHREDILETFFMNFFHGGRLAAMPPKLLNDEGDVLVLRPLAYCAETDLVKFAEGMKFPIIPCDLCGSQDGLQRNAMKAMLEDIERRMPGRKDTMIRALANVRPSHLLDRQLFDFAGLGIL.

The span at Met-1–Ala-11 shows a compositional bias: polar residues. A disordered region spans residues Met-1–Pro-20. Residues Ser-63–Ser-68 carry the PP-loop motif motif. The [4Fe-4S] cluster site is built by Cys-138, Cys-141, and Cys-229.

It belongs to the TtcA family. As to quaternary structure, homodimer. Mg(2+) serves as cofactor. Requires [4Fe-4S] cluster as cofactor.

Its subcellular location is the cytoplasm. It carries out the reaction cytidine(32) in tRNA + S-sulfanyl-L-cysteinyl-[cysteine desulfurase] + AH2 + ATP = 2-thiocytidine(32) in tRNA + L-cysteinyl-[cysteine desulfurase] + A + AMP + diphosphate + H(+). It participates in tRNA modification. In terms of biological role, catalyzes the ATP-dependent 2-thiolation of cytidine in position 32 of tRNA, to form 2-thiocytidine (s(2)C32). The sulfur atoms are provided by the cysteine/cysteine desulfurase (IscS) system. The chain is tRNA-cytidine(32) 2-sulfurtransferase from Chelativorans sp. (strain BNC1).